Consider the following 1341-residue polypeptide: DNA-directed RNA polymerase subunit beta (1341 aa).

Belongs to the RNA polymerase beta chain family. In terms of assembly, the RNAP catalytic core consists of 2 alpha, 1 beta, 1 beta' and 1 omega subunit. When a sigma factor is associated with the core the holoenzyme is formed, which can initiate transcription.

It catalyses the reaction RNA(n) + a ribonucleoside 5'-triphosphate = RNA(n+1) + diphosphate. Its function is as follows. DNA-dependent RNA polymerase catalyzes the transcription of DNA into RNA using the four ribonucleoside triphosphates as substrates. This chain is DNA-directed RNA polymerase subunit beta, found in Pseudoalteromonas translucida (strain TAC 125).